The sequence spans 678 residues: Glycine--tRNA ligase beta subunit (678 aa).

This sequence belongs to the class-II aminoacyl-tRNA synthetase family. In terms of assembly, tetramer of two alpha and two beta subunits.

It is found in the cytoplasm. It carries out the reaction tRNA(Gly) + glycine + ATP = glycyl-tRNA(Gly) + AMP + diphosphate. This is Glycine--tRNA ligase beta subunit from Streptococcus pneumoniae (strain Hungary19A-6).